We begin with the raw amino-acid sequence, 307 residues long: MENESKYKTIDHVICVEGNKKIHVWETLPEENSPKRKNAIIIASGFARRMDHFAGLAEYLSRNGFHVIRYDSLHHVGLSSGTIDEFTMSIGKQSLLAVVDWLTTRKINNFGMLASSLSARIAYASLSEINASFLITAVGFVNLRYSLERALGFDYLSLPINELPNNLDFEGHKLGAEVFARDCLDFGWEDLASTINNMMYLDIPFIAFTANNDNWVKQDEVITLLSNIRSNRCKIYSLLGSSHDLSENLVVLRNFYQSVTKAAIAMDNDHLDIDVDITEPSFEHLTIATVNERRMRIEIENQAISLS.

Residues Ser116, Asp213, and His243 each act as charge relay system in the active site.

The protein belongs to the LuxD family.

It functions in the pathway lipid metabolism; fatty acid reduction for biolumincescence. In terms of biological role, acyl transferase is part of the fatty acid reductase system required for aldehyde biosynthesis; it produces fatty acids for the luminescent reaction. The polypeptide is Acyl transferase (Photorhabdus luminescens (Xenorhabdus luminescens)).